Here is a 646-residue protein sequence, read N- to C-terminus: Rho guanine nucleotide exchange factor 7 (646 aa).

Positions 6–65 (NSQLVVRAKFNFQQTNEDELSFSKGDVIHVTRVEEGGWWEGTHNGRTGWFPSNYVREIKP) constitute an SH3 domain. Residues Ser7, Ser71, and Ser79 each carry the phosphoserine modification. Residues 93–273 (YYNVVLQNIL…KNLSAQCQEV (181 aa)) enclose the DH domain. One can recognise a PH domain in the interval 295–400 (DIKTLGSVTY…WVEHLQRQTK (106 aa)). Residue Ser340 is modified to Phosphoserine. Disordered regions lie at residues 402–464 (TSVS…GPLE) and 500–520 (KTMK…DEEF). Residues 415–428 (PSHTLPSHPLTPSS) are compositionally biased toward polar residues. Over residues 500–512 (KTMKKLLPKRKPE) the composition is skewed to basic residues. Phosphoserine is present on residues Ser516 and Ser560.

As to quaternary structure, interacts with SCRIB; interaction is direct and may play a role in regulation of apoptosis. Interacts with PAK kinases through the SH3 domain. Interacts with GIT1 and probably TGFB1I1. Interacts with ITCH and PARVB. Interacts with FRMPD4 (via N-terminus). Interacts with CaMK1. Interacts with PTK2/FAK1 and RAC1. Interacts with BIN2. Interacts with YWHAZ. Interacts (via PH domain) with NOX1 (via FAD-binding FR-type domain). Phosphorylated on Ser-516 by CaMK1; enhancement of GEF activity and downstream activation of RAC1. Phosphorylated by PTK2/FAK1; this promotes interaction with RAC1.

The protein localises to the cell junction. Its subcellular location is the focal adhesion. The protein resides in the cell projection. It localises to the ruffle. It is found in the cytoplasm. The protein localises to the cell cortex. Its subcellular location is the lamellipodium. Its function is as follows. Acts as a RAC1 guanine nucleotide exchange factor (GEF) and can induce membrane ruffling. Functions in cell migration, attachment and cell spreading. Promotes targeting of RAC1 to focal adhesions. May function as a positive regulator of apoptosis. Downstream of NMDA receptors and CaMKK-CaMK1 signaling cascade, promotes the formation of spines and synapses in hippocampal neurons. This Rattus norvegicus (Rat) protein is Rho guanine nucleotide exchange factor 7 (Arhgef7).